We begin with the raw amino-acid sequence, 409 residues long: Isocitrate dehydrogenase [NADP] 1 (409 aa).

Residues Lys75, Thr78, Thr80, and Arg85 each contribute to the NADP(+) site. Mn(2+) is bound by residues Asp255, Asp278, and Asp282. Residues Gly313, Thr314, Val315, His318, and Asn331 each contribute to the NADP(+) site.

Belongs to the isocitrate and isopropylmalate dehydrogenases family. As to quaternary structure, homodimer. Mg(2+) serves as cofactor. Mn(2+) is required as a cofactor.

It carries out the reaction D-threo-isocitrate + NADP(+) = 2-oxoglutarate + CO2 + NADPH. Its function is as follows. Catalyzes the oxidative decarboxylation of isocitrate to 2-oxoglutarate and carbon dioxide with the concomitant reduction of NADP(+). The chain is Isocitrate dehydrogenase [NADP] 1 (icd) from Mycobacterium bovis (strain ATCC BAA-935 / AF2122/97).